The chain runs to 96 residues: Small ribosomal subunit protein bS6 (96 aa).

This sequence belongs to the bacterial ribosomal protein bS6 family.

In terms of biological role, binds together with bS18 to 16S ribosomal RNA. The polypeptide is Small ribosomal subunit protein bS6 (Streptococcus pyogenes serotype M1).